A 1093-amino-acid polypeptide reads, in one-letter code: Electroneutral sodium bicarbonate exchanger 1 (1093 aa).

2 disordered regions span residues 1 to 25 and 55 to 95; these read MPAAGSNEPDGVLSYQRPDEEAVVD and PLGR…HDTP. Residues 1–478 lie on the Extracellular side of the membrane; that stretch reads MPAAGSNEPD…DYRDALSLQC (478 aa). Positions 59-77 are enriched in basic residues; the sequence is QSHRHHRTHGQKHRRRGRG. Residues Phe-167 and Leu-169 each contribute to the Zn(2+) site. Residues 340–344 carry the VTVLP; mediates dimerization motif; it reads LFILL. Residues 479 to 499 traverse the membrane as a helical segment; sequence LASFLFLYCACMSPVITFGGL. The Cytoplasmic segment spans residues 500–523; that stretch reads LGEATEGRISAIESLFGASMTGIA. Residues 524–544 traverse the membrane as a helical segment; it reads YSLFAGQALTILGSTGPVLVF. Residues 545–565 lie on the Extracellular side of the membrane; that stretch reads EKILFKFCKDYALSYLSLRAC. The helical transmembrane segment at 566–586 threads the bilayer; that stretch reads IGLWTAFLCIVLVATDASSLV. The Cytoplasmic portion of the chain corresponds to 587-595; the sequence is CYITRFTEE. The helical transmembrane segment at 596 to 616 threads the bilayer; the sequence is AFASLICIIFIYEAIEKLIHL. At 617-687 the chain is on the extracellular side; sequence AETYPIHMHS…EFMGSACGHH (71 aa). 2 disulfide bridges follow: Cys-636–Cys-684 and Cys-638–Cys-672. N-linked (GlcNAc) asparagine glycosylation occurs at Asn-646. A helical membrane pass occupies residues 688–708; the sequence is GPYTPDVLFWSCILFFTTFIL. Residues 709 to 731 lie on the Cytoplasmic side of the membrane; that stretch reads SSTLKTFKTSRYFPTRVRSMVSD. A helical membrane pass occupies residues 732 to 752; that stretch reads FAVFLTIFTMVIIDFLIGVPS. At 753–778 the chain is on the extracellular side; the sequence is PKLQVPSVFKPTRDDRGWIINPIGPN. The helical transmembrane segment at 779 to 799 threads the bilayer; sequence PWWTVIAAIIPALLCTILIFM. Residues 800–824 are Cytoplasmic-facing; it reads DQQITAVIINRKEHKLKKGCGYHLD. Residues 825–845 traverse the membrane as a helical segment; that stretch reads LLMVAIMLGVCSIMGLPWFVA. At 846 to 881 the chain is on the extracellular side; sequence ATVLSITHVNSLKLESECSAPGEQPKFLGIREQRVT. A helical membrane pass occupies residues 882-902; it reads GLMIFVLMGCSVFMTAILKFI. Topologically, residues 903–904 are cytoplasmic; that stretch reads PM. The chain crosses the membrane as a helical span at residues 905–925; the sequence is PVLYGVFLYMGVSSLQGIQFF. The Extracellular segment spans residues 926–962; that stretch reads DRLKLFGMPAKHQPDFIYLRHVPLRKVHLFTLIQLTC. A helical membrane pass occupies residues 963 to 983; it reads LVLLWVIKASPAAIVFPMMVL. Residues 984–1093 lie on the Cytoplasmic side of the membrane; sequence ALVFVRKVMD…GNAKEKSLFN (110 aa). Residues 1010 to 1036 adopt a coiled-coil conformation; it reads ESKKKKLDDAKKKAKEEEEAEKMLEIG.

This sequence belongs to the anion exchanger (TC 2.A.31) family. As to quaternary structure, homodimer. Expressed in the pyramidal cells of the hippocampus (at protein level). Highly expressed in all major regions of the brain, spinal column and in testis, and moderate levels in trachea, thyroid and medulla region of kidney. Low expression levels observed in pancreas and kidney cortex. In terms of tissue distribution, expressed in the brain. As to expression, expressed in the brain, heart and kidney.

The protein resides in the apical cell membrane. It is found in the basolateral cell membrane. It localises to the cytoplasmic vesicle. Its subcellular location is the secretory vesicle. The protein localises to the synaptic vesicle membrane. The protein resides in the cell membrane. The catalysed reaction is 2 hydrogencarbonate(out) + chloride(in) + Na(+)(out) = 2 hydrogencarbonate(in) + chloride(out) + Na(+)(in). Activity is inhibited by 4,4'-Di-isothiocyanatostilbene-2,2'-disulfonic acid (DIDS - an inhibitor of several anion channels and transporters). Its activity is regulated as follows. Activity is inhibited by 4,4'-Di-isothiocyanatostilbene-2,2'-disulfonic acid (DIDS - an inhibitor of several anion channels and transporters). Zinc-binding negatively regulates its activity. Functionally, mediates electroneutral sodium- and carbonate-dependent chloride-HCO3(-) exchange with a Na(+):HCO3(-) stoichiometry of 2:1. Plays a major role in pH regulation in neurons. Mediates sodium reabsorption in the renal cortical collecting ducts. The chain is Electroneutral sodium bicarbonate exchanger 1 from Homo sapiens (Human).